Consider the following 1939-residue polypeptide: Myosin-6 (1939 aa).

Positions 32 to 81 constitute a Myosin N-terminal SH3-like domain; it reads DIRTECFVPDDKEEFVKAKIVSREGGKVTAETENGKTVTVKEDQVMQQNP. Positions 85 to 780 constitute a Myosin motor domain; sequence DKIEDMAMLT…LLGLLEEMRD (696 aa). Residue Lys129 is modified to N6,N6,N6-trimethyllysine. Residue 178-185 participates in ATP binding; it reads GESGAGKT. Thr379 bears the Phosphothreonine mark. Phosphoserine is present on Ser417. Actin-binding stretches follow at residues 657 to 679 and 759 to 773; these read LNKLMTNLRTTHPHFVRCIIPNE and KFGHTKVFFKAGLLG. In terms of domain architecture, IQ spans 783 to 812; it reads LSRIITRIQAQARGQLMRIEFKKMVERRDA. Residues 842–1939 adopt a coiled-coil conformation; sequence LKSAETEKEM…GAKQKMHDEE (1098 aa). 2 positions are modified to phosphoserine: Ser1090 and Ser1139. A Phosphotyrosine modification is found at Tyr1261. A Phosphoserine modification is found at Ser1271. Phosphothreonine is present on residues Thr1277 and Thr1284. Ser1309 carries the phosphoserine modification. Tyr1310 bears the Phosphotyrosine mark. A Phosphothreonine modification is found at Thr1311. Ser1512 is modified (phosphoserine). Phosphothreonine is present on residues Thr1515 and Thr1681. The interval 1908-1939 is disordered; it reads AEERADIAESQVNKLRAKSRDIGAKQKMHDEE. Positions 1925 to 1939 are enriched in basic and acidic residues; it reads KSRDIGAKQKMHDEE.

This sequence belongs to the TRAFAC class myosin-kinesin ATPase superfamily. Myosin family. Muscle myosin is a hexameric protein that consists of 2 heavy chain subunits (MHC), 2 alkali light chain subunits (MLC) and 2 regulatory light chain subunits (MLC-2).

It is found in the cytoplasm. Its subcellular location is the myofibril. Its function is as follows. Muscle contraction. This chain is Myosin-6 (MYH6), found in Mesocricetus auratus (Golden hamster).